Here is a 62-residue protein sequence, read N- to C-terminus: Large ribosomal subunit protein bL28 (62 aa).

Residues M1–K28 are disordered.

This sequence belongs to the bacterial ribosomal protein bL28 family.

The protein is Large ribosomal subunit protein bL28 of Bacillus anthracis (strain CDC 684 / NRRL 3495).